We begin with the raw amino-acid sequence, 397 residues long: Flavohemoprotein (397 aa).

The 137-residue stretch at 4 to 140 (SFSPHTITLI…IANLLKDREA (137 aa)) folds into the Globin domain. Position 87 (His-87) interacts with heme b. Residues Tyr-97 and Glu-139 each act as charge relay system in the active site. The tract at residues 151–397 (GGWIHWRRFV…FGPMDEEMAA (247 aa)) is reductase. One can recognise an FAD-binding FR-type domain in the interval 154–258 (IHWRRFVISK…TPPVGDFFLP (105 aa)). FAD is bound by residues Tyr-192 and 207–210 (RNYS). An NADP(+)-binding site is contributed by 271–276 (GVGLTP). Residue 387–390 (FFGP) participates in FAD binding.

Belongs to the globin family. Two-domain flavohemoproteins subfamily. It in the C-terminal section; belongs to the flavoprotein pyridine nucleotide cytochrome reductase family. Requires heme b as cofactor. The cofactor is FAD.

The enzyme catalyses 2 nitric oxide + NADPH + 2 O2 = 2 nitrate + NADP(+) + H(+). The catalysed reaction is 2 nitric oxide + NADH + 2 O2 = 2 nitrate + NAD(+) + H(+). Functionally, is involved in NO detoxification in an aerobic process, termed nitric oxide dioxygenase (NOD) reaction that utilizes O(2) and NAD(P)H to convert NO to nitrate, which protects the bacterium from various noxious nitrogen compounds. Therefore, plays a central role in the inducible response to nitrosative stress. The chain is Flavohemoprotein from Xylella fastidiosa (strain 9a5c).